We begin with the raw amino-acid sequence, 351 residues long: tRNA-specific 2-thiouridylase MnmA (351 aa).

ATP is bound at residue Ala-6–Ser-13. Residue Cys-96 is the Nucleophile of the active site. A disulfide bridge links Cys-96 with Cys-193. Gly-120 contributes to the ATP binding site. An interaction with tRNA region spans residues Lys-143 to Gln-145. Residue Cys-193 is the Cysteine persulfide intermediate of the active site. An interaction with tRNA region spans residues Arg-298 to Tyr-299.

The protein belongs to the MnmA/TRMU family.

The protein resides in the cytoplasm. The catalysed reaction is S-sulfanyl-L-cysteinyl-[protein] + uridine(34) in tRNA + AH2 + ATP = 2-thiouridine(34) in tRNA + L-cysteinyl-[protein] + A + AMP + diphosphate + H(+). Catalyzes the 2-thiolation of uridine at the wobble position (U34) of tRNA, leading to the formation of s(2)U34. In Nitratidesulfovibrio vulgaris (strain DSM 19637 / Miyazaki F) (Desulfovibrio vulgaris), this protein is tRNA-specific 2-thiouridylase MnmA.